Reading from the N-terminus, the 1157-residue chain is Endo-1,4-beta-xylanase A (1157 aa).

Positions 1 to 33 (MMKNNVDRIVSIVTALIMIFGASLFSPPIRVFA) are cleaved as a signal peptide. 2 CBM-cenC domains span residues 38 to 189 (INLV…VTTQ) and 195 to 343 (GNVI…VIGE). In terms of domain architecture, GH10 spans 352 to 675 (QNDIPDLYSV…KPAFWAVVDP (324 aa)). The active-site Proton donor is glutamate 495. Aspartate 537 is an active-site residue. Glutamate 600 (nucleophile) is an active-site residue. SLH domains follow at residues 1051–1114 (KKGV…YSGE) and 1115–1157 (FSDV…EMTQ).

It belongs to the glycosyl hydrolase 10 (cellulase F) family.

The enzyme catalyses Endohydrolysis of (1-&gt;4)-beta-D-xylosidic linkages in xylans.. Its pathway is glycan degradation; xylan degradation. Endo-acting enzyme that randomly cleaves the internal xylosidic linkages of the xylan backbone, yielding xylooligosaccharides of various lengths which are further hydrolyzed to xylose molecules by beta-xylosidase (EC 3.2.1.37). Requires at least three xylose residues for catalytic activity. Does not have activity against xylobiose. This is Endo-1,4-beta-xylanase A (xynA) from Thermoanaerobacterium saccharolyticum.